The sequence spans 211 residues: Protein-lysine N-methyltransferase DDB_G0272708 (211 aa).

This sequence belongs to the class I-like SAM-binding methyltransferase superfamily. EFM5 family.

Its subcellular location is the cytoplasm. Functionally, S-adenosyl-L-methionine-dependent protein-lysine N-methyltransferase that methylates elongation factor 1-alpha. This chain is Protein-lysine N-methyltransferase DDB_G0272708, found in Dictyostelium discoideum (Social amoeba).